The chain runs to 146 residues: Leghemoglobin-3 (146 aa).

The Globin domain occupies 2-146; it reads GFTDKQEALV…LATAIKKAMV (145 aa). Nitrated tyrosine is present on Y29. S44 is a heme b binding site. S44 bears the Phosphoserine mark. H61 serves as a coordination point for O2. Residues K64, H93, and K96 each coordinate heme b. Residue Y134 is modified to Nitrated tyrosine.

The protein belongs to the plant globin family. As to quaternary structure, monomer. Post-translationally, nitrated in effective nodules and particularly in hypoxic conditions; this mechanism may play a protective role in the symbiosis by buffering toxic peroxynitrite NO(2)(-). Nitration level decrease during nodule senescence. In terms of processing, phosphorylation at Ser-44 disrupts the molecular environment of its porphyrin ring oxygen binding pocket, thus leading to a reduced oxygen consumption and to the delivery of oxygen O(2) to symbiosomes. Root nodules.

The protein resides in the cytoplasm. It localises to the cytosol. It is found in the nucleus. Leghemoglobin that reversibly binds oxygen O(2) through a pentacoordinated heme iron. In root nodules, facilitates the diffusion of oxygen to the bacteroids while preventing the bacterial nitrogenase from being inactivated by buffering dioxygen, nitric oxide and carbon monoxide, and promoting the formation of reactive oxygen species (ROS, e.g. H(2)O(2)). This role is essential for symbiotic nitrogen fixation (SNF). This Medicago sativa (Alfalfa) protein is Leghemoglobin-3.